The primary structure comprises 1585 residues: Maestro heat-like repeat-containing protein family member 2B (1585 aa).

HEAT repeat units follow at residues 28 to 65, 228 to 263, 272 to 309, 310 to 346, 405 to 445, 531 to 569, 572 to 611, 662 to 699, 777 to 819, 964 to 1001, 1021 to 1059, 1112 to 1151, 1157 to 1195, 1258 to 1295, and 1363 to 1402; these read VNKEDIYSHLTSVIQNTDILDDAIVQRLIYYASKDMRD, GYALGQVPWLLNQYKDKEIDFHVTQSLKQILTAAVL, LRRSIFINLLQQICRAPEPPVKENEMKASSCFLILAHS, NPGELMEFFDEQVRSNNEAIRVGILTLLRLAVNADEP, TLNR…LVIG, IGLLKILPEIIHPKLVDLWKTRLPELLQPLEGKNISTVL, TMLLQLLKESLWKISDVAWTIQLTQDFKQQMGSYSNNSTE, ENHLDIVLKVLKTFQNQEKFFMNRCKSLFSGKKSLTKT, SYKE…LKPQ, HLEVERLQGLQEGLESDDVQVQIKISSKIAKIVSKFIP, PTCTKACGIWMITVLKQQGAALEDQLLEILGTIYHHMPV, ASSGKLLQALIDKLETELEDDIARVEAISVACAMYEVISM, GLYPELFTLLLKLVSCTLGQKMLTCPWSHRRHVMQQGEQ, GVILDIMEQLLSSLTSSSENYRITGAAFFSELMKEPIL, and CESLKALKKILELLTDRDVSFYFKEIVLQTRTFFEDEQDD.

As to quaternary structure, found in a complex at least composed of MROH2B, PRKACA isoform 2 and TCP11. Interacts with PRKACA. Interacts with TCP11. Constitutively phosphorylated on serine and threonine residues in acrosomal region of the sperm head, midpiece and flagellar regions of noncapacitated spermatozoa. Phosphorylation on tyrosine residues increases upon sperm capacitation within the acrosomal and tail regions in a protein kinase A (PKA)-dependent signaling pathway.

Its subcellular location is the cytoplasm. The protein resides in the cytoplasmic vesicle. It is found in the secretory vesicle. The protein localises to the acrosome. It localises to the cell projection. Its subcellular location is the cilium. The protein resides in the flagellum. May play a role in the process of sperm capacitation. The protein is Maestro heat-like repeat-containing protein family member 2B of Homo sapiens (Human).